Consider the following 283-residue polypeptide: Elongation factor Ts (283 aa).

Residues 80 to 83 (TDFV) are involved in Mg(2+) ion dislocation from EF-Tu.

This sequence belongs to the EF-Ts family.

It is found in the cytoplasm. Associates with the EF-Tu.GDP complex and induces the exchange of GDP to GTP. It remains bound to the aminoacyl-tRNA.EF-Tu.GTP complex up to the GTP hydrolysis stage on the ribosome. In Actinobacillus pleuropneumoniae serotype 3 (strain JL03), this protein is Elongation factor Ts.